A 184-amino-acid chain; its full sequence is MSQSAVSKRYAAALFDIALESKLVNEIEEELTVVKKIFIEHKDLNAVLGHPKVPAEKKKQILKDSFGSVSTAVLHTLYLLVDRSRTSIVPDLADEYVKMANRFRGTEDAIVYSVKPLSEEEISSFSQVFAKEAGAASLRVRNEVNPDLIGGVKIRIGNRIYDGSVRGKLDRIERQLAGENRKKG.

Belongs to the ATPase delta chain family. In terms of assembly, F-type ATPases have 2 components, F(1) - the catalytic core - and F(0) - the membrane proton channel. F(1) has five subunits: alpha(3), beta(3), gamma(1), delta(1), epsilon(1). F(0) has three main subunits: a(1), b(2) and c(10-14). The alpha and beta chains form an alternating ring which encloses part of the gamma chain. F(1) is attached to F(0) by a central stalk formed by the gamma and epsilon chains, while a peripheral stalk is formed by the delta and b chains.

It is found in the cell membrane. Functionally, f(1)F(0) ATP synthase produces ATP from ADP in the presence of a proton or sodium gradient. F-type ATPases consist of two structural domains, F(1) containing the extramembraneous catalytic core and F(0) containing the membrane proton channel, linked together by a central stalk and a peripheral stalk. During catalysis, ATP synthesis in the catalytic domain of F(1) is coupled via a rotary mechanism of the central stalk subunits to proton translocation. This protein is part of the stalk that links CF(0) to CF(1). It either transmits conformational changes from CF(0) to CF(1) or is implicated in proton conduction. The polypeptide is ATP synthase subunit delta (Bacillus licheniformis (strain ATCC 14580 / DSM 13 / JCM 2505 / CCUG 7422 / NBRC 12200 / NCIMB 9375 / NCTC 10341 / NRRL NRS-1264 / Gibson 46)).